Here is a 150-residue protein sequence, read N- to C-terminus: UPF0756 membrane protein YE1142 (150 aa).

4 helical membrane-spanning segments follow: residues 1 to 21, 51 to 71, 88 to 108, and 114 to 134; these read MAAL…GIIS, YGLT…IASG, ILAI…VSLM, and VVAG…GVPV.

Belongs to the UPF0756 family.

It localises to the cell membrane. This is UPF0756 membrane protein YE1142 from Yersinia enterocolitica serotype O:8 / biotype 1B (strain NCTC 13174 / 8081).